The sequence spans 204 residues: Thymidine kinase (204 aa).

ATP is bound by residues 23–30 (GSMFSGKT) and 95–98 (DEAQ). Glu-96 functions as the Proton acceptor in the catalytic mechanism. Residues Cys-152, Cys-155, Cys-184, and Cys-187 each coordinate Zn(2+).

The protein belongs to the thymidine kinase family. In terms of assembly, homotetramer.

It localises to the cytoplasm. It carries out the reaction thymidine + ATP = dTMP + ADP + H(+). The protein is Thymidine kinase of Porphyromonas gingivalis (strain ATCC 33277 / DSM 20709 / CIP 103683 / JCM 12257 / NCTC 11834 / 2561).